A 102-amino-acid polypeptide reads, in one-letter code: Large ribosomal subunit protein uL24 (102 aa).

It belongs to the universal ribosomal protein uL24 family. As to quaternary structure, part of the 50S ribosomal subunit.

Its function is as follows. One of two assembly initiator proteins, it binds directly to the 5'-end of the 23S rRNA, where it nucleates assembly of the 50S subunit. One of the proteins that surrounds the polypeptide exit tunnel on the outside of the subunit. This is Large ribosomal subunit protein uL24 from Burkholderia mallei (strain NCTC 10229).